A 484-amino-acid chain; its full sequence is Folate synthesis bifunctional protein (484 aa).

An HPPK region spans residues 15-141 (VIALGSNVGN…PFVLAPLVDL (127 aa)). The Pterin-binding domain maps to 202–470 (TYVMGILNLT…NVRDNVDAAR (269 aa)). The tract at residues 204–484 (VMGILNLTPD…MMTKRFKNVD (281 aa)) is DHPS. A Mg(2+)-binding site is contributed by N209. (7,8-dihydropterin-6-yl)methyl diphosphate is bound by residues T249, D286, N305, D378, K423, and 458–460 (RVH).

In the N-terminal section; belongs to the HPPK family. This sequence in the C-terminal section; belongs to the DHPS family. It depends on Mg(2+) as a cofactor. As to expression, expressed exclusively in reproductive tissues.

It is found in the cytoplasm. The protein resides in the cytosol. It catalyses the reaction 6-hydroxymethyl-7,8-dihydropterin + ATP = (7,8-dihydropterin-6-yl)methyl diphosphate + AMP + H(+). The catalysed reaction is (7,8-dihydropterin-6-yl)methyl diphosphate + 4-aminobenzoate = 7,8-dihydropteroate + diphosphate. Its pathway is cofactor biosynthesis; tetrahydrofolate biosynthesis; 2-amino-4-hydroxy-6-hydroxymethyl-7,8-dihydropteridine diphosphate from 7,8-dihydroneopterin triphosphate: step 4/4. The protein operates within cofactor biosynthesis; tetrahydrofolate biosynthesis; 7,8-dihydrofolate from 2-amino-4-hydroxy-6-hydroxymethyl-7,8-dihydropteridine diphosphate and 4-aminobenzoate: step 1/2. Its activity is regulated as follows. Inhibited by sulfanilamide. In terms of biological role, catalyzes the first two consecutive steps of tetrahydrofolate biosynthesis. Plays a role in seed stress response and survival. The polypeptide is Folate synthesis bifunctional protein (Arabidopsis thaliana (Mouse-ear cress)).